Here is a 400-residue protein sequence, read N- to C-terminus: Enoyl-[acyl-carrier-protein] reductase [NADH] 1 (400 aa).

NAD(+) is bound by residues 48–53, 74–75, 111–112, and 139–140; these read GASSGY, FE, DA, and LA. Substrate is bound at residue Tyr-225. Residue Tyr-235 is the Proton donor of the active site. NAD(+) is bound by residues Lys-244 and 273-275; that span reads VVT.

Belongs to the TER reductase family. Monomer.

The enzyme catalyses a 2,3-saturated acyl-[ACP] + NAD(+) = a (2E)-enoyl-[ACP] + NADH + H(+). It participates in lipid metabolism; fatty acid biosynthesis. Functionally, involved in the final reduction of the elongation cycle of fatty acid synthesis (FAS II). Catalyzes the reduction of a carbon-carbon double bond in an enoyl moiety that is covalently linked to an acyl carrier protein (ACP). The protein is Enoyl-[acyl-carrier-protein] reductase [NADH] 1 of Vibrio parahaemolyticus serotype O3:K6 (strain RIMD 2210633).